A 440-amino-acid polypeptide reads, in one-letter code: Probable secretory pathway GDP dissociation inhibitor 1 (440 aa).

It belongs to the Rab GDI family.

In Schizosaccharomyces pombe (strain 972 / ATCC 24843) (Fission yeast), this protein is Probable secretory pathway GDP dissociation inhibitor 1 (gdi1).